The sequence spans 376 residues: Pulmonary surfactant-associated protein B (376 aa).

The first 24 residues, 1–24 (MAKLHLQWLLLLPTLCSLGAATES), serve as a signal peptide directing secretion. One can recognise a Saposin A-type domain in the interval 25–63 (ASSPDCAQGPKFWCQSLEQAIQCRALGHCLQEVWGHAGA). The propeptide occupies 25–190 (ASSPDCAQGP…PHTQDLSEQQ (166 aa)). 3 consecutive Saposin B-type domains span residues 63-145 (ANDL…PLGQ), 194-271 (PLPF…STAD), and 290-365 (QDTE…EAPA). 9 disulfide bridges follow: Cys67-Cys141, Cys70-Cys135, Cys98-Cys110, Cys198-Cys267, Cys201-Cys261, Cys225-Cys236, Cys294-Cys361, Cys297-Cys355, and Cys320-Cys330. Positions 270 to 376 (ADAIGPALPA…PLQCFQTPHL (107 aa)) are excised as a propeptide. The N-linked (GlcNAc...) asparagine glycan is linked to Asn306.

In terms of assembly, homodimer; disulfide-linked.

The protein localises to the secreted. Its subcellular location is the extracellular space. It is found in the surface film. Functionally, pulmonary surfactant-associated proteins promote alveolar stability by lowering the surface tension at the air-liquid interface in the peripheral air spaces. SP-B increases the collapse pressure of palmitic acid to nearly 70 millinewtons per meter. This Rattus norvegicus (Rat) protein is Pulmonary surfactant-associated protein B (Sftpb).